Consider the following 316-residue polypeptide: Olfactory receptor 12D3 (316 aa).

The Extracellular segment spans residues 1-23; it reads MENVTTMNEFLLLGLTGVQELQP. N3 carries N-linked (GlcNAc...) asparagine glycosylation. A helical transmembrane segment spans residues 24–44; sequence FFFGIFLIIYLINLIGNGSIL. Over 45–52 the chain is Cytoplasmic; it reads VMVVLEPQ. A helical transmembrane segment spans residues 53 to 73; that stretch reads LHSPMYFFLGNLSCLDISYSS. The Extracellular segment spans residues 74-97; it reads VTLPKLLVNLVCSRRAISFLGCIT. A disulfide bond links C95 and C187. Residues 98-118 form a helical membrane-spanning segment; sequence QLHFFHFLGSTEAILLAIMAF. Over 119 to 137 the chain is Cytoplasmic; that stretch reads DRFVAICNPLRYTVIMNPQ. A helical transmembrane segment spans residues 138–158; it reads VCILLAAAAWLISFFYALMHS. The Extracellular portion of the chain corresponds to 159-195; sequence VMTAHLSFCGSQKLNHFFYDVKPLLELACSDTLLNQW. A helical transmembrane segment spans residues 196–215; it reads LLSIVTGSISMGAFFLTLLS. At 216 to 236 the chain is on the cytoplasmic side; that stretch reads CFYVIGFLLFKNRSCRILHKA. Residues 237 to 257 form a helical membrane-spanning segment; the sequence is LSTCASHFMVVCLFYGPVGFT. Over 258–270 the chain is Extracellular; sequence YIRPASATSMIQD. The helical transmembrane segment at 271 to 291 threads the bilayer; it reads RIMAIMYSAVTPVLNPLIYTL. Topologically, residues 292 to 316 are cytoplasmic; that stretch reads RNKEVMMALKKIFGRKLFKDWQQHH.

It belongs to the G-protein coupled receptor 1 family.

It is found in the cell membrane. Odorant receptor. This Homo sapiens (Human) protein is Olfactory receptor 12D3 (OR12D3).